The following is a 299-amino-acid chain: Mitochondrial 2-oxodicarboxylate carrier (299 aa).

Solcar repeat units lie at residues 11 to 100, 107 to 196, and 205 to 294; these read NEAS…YKKL, SPAL…VKNI, and LEFL…TYSW. The next 6 helical transmembrane spans lie at 17-37, 62-82, 100-120, 179-199, 211-231, and 274-290; these read ILAG…LDVV, MIFR…PILA, LLGY…LGSG, HGVF…IIPV, FGIG…FDVA, and IMRL…VYEY.

Belongs to the mitochondrial carrier (TC 2.A.29) family.

The protein resides in the mitochondrion inner membrane. The catalysed reaction is 2-oxoadipate(in) + 2-oxoglutarate(out) = 2-oxoadipate(out) + 2-oxoglutarate(in). The enzyme catalyses hexanedioate(in) + 2-oxoglutarate(out) = hexanedioate(out) + 2-oxoglutarate(in). It catalyses the reaction L-2-aminoadipate(in) + 2-oxoglutarate(out) = L-2-aminoadipate(out) + 2-oxoglutarate(in). It carries out the reaction glutarate(in) + 2-oxoglutarate(out) = glutarate(out) + 2-oxoglutarate(in). The catalysed reaction is 2-oxoheptanedioate(in) + 2-oxoglutarate(out) = 2-oxoheptanedioate(out) + 2-oxoglutarate(in). The enzyme catalyses heptanedioate(in) + 2-oxoglutarate(out) = heptanedioate(out) + 2-oxoglutarate(in). It catalyses the reaction citrate(in) + 2-oxoglutarate(out) = citrate(out) + 2-oxoglutarate(in). In terms of biological role, transports dicarboxylates across the inner membranes of mitochondria by a counter-exchange mechanism. Can transport 2-oxoadipate (2-oxohexanedioate), 2-oxoglutarate, adipate (hexanedioate), glutarate, and to a lesser extent, pimelate (heptanedioate), 2-oxopimelate (2-oxoheptanedioate), 2-aminoadipate (2-aminohexanedioate), oxaloacetate, and citrate. Plays a central role in catabolism of lysine, hydroxylysine, and tryptophan, by transporting common metabolite intermediates (such as 2-oxoadipate) into the mitochondria, where it is converted into acetyl-CoA and can enter the citric acid (TCA) cycle. This chain is Mitochondrial 2-oxodicarboxylate carrier (SLC25A21), found in Bos taurus (Bovine).